The sequence spans 226 residues: Biosynthetic peptidoglycan transglycosylase (226 aa).

Residues 8–28 form a helical membrane-spanning segment; it reads FFGWTWFVMWRFLLLLALLLL.

Belongs to the glycosyltransferase 51 family.

It localises to the cell inner membrane. It catalyses the reaction [GlcNAc-(1-&gt;4)-Mur2Ac(oyl-L-Ala-gamma-D-Glu-L-Lys-D-Ala-D-Ala)](n)-di-trans,octa-cis-undecaprenyl diphosphate + beta-D-GlcNAc-(1-&gt;4)-Mur2Ac(oyl-L-Ala-gamma-D-Glu-L-Lys-D-Ala-D-Ala)-di-trans,octa-cis-undecaprenyl diphosphate = [GlcNAc-(1-&gt;4)-Mur2Ac(oyl-L-Ala-gamma-D-Glu-L-Lys-D-Ala-D-Ala)](n+1)-di-trans,octa-cis-undecaprenyl diphosphate + di-trans,octa-cis-undecaprenyl diphosphate + H(+). Its pathway is cell wall biogenesis; peptidoglycan biosynthesis. In terms of biological role, peptidoglycan polymerase that catalyzes glycan chain elongation from lipid-linked precursors. The sequence is that of Biosynthetic peptidoglycan transglycosylase from Shewanella frigidimarina (strain NCIMB 400).